The following is a 70-amino-acid chain: Metallothionein-like protein 1 (70 aa).

This sequence belongs to the metallothionein superfamily. Type 15 family.

Its function is as follows. Metallothioneins have a high content of cysteine residues that bind various heavy metals. This Festuca rubra (Red fescue) protein is Metallothionein-like protein 1 (MT1).